The chain runs to 578 residues: Probable ATP-dependent RNA helicase DDX55 homolog (578 aa).

A Q motif motif is present at residues 7–37 (PVALKTFREKLGPELLEVFDKSYKSFTDVQV). Residues 40–218 (GTHLLNLSDV…VFGLRNAKQV (179 aa)) form the Helicase ATP-binding domain. 53-60 (SPTGSGKT) lines the ATP pocket. The DEAD box motif lies at 166–169 (DEAD). The Helicase C-terminal domain occupies 231-393 (TLKNYYVECR…EIKVPTNNSR (163 aa)). The tract at residues 507–557 (AAKDKKRREKEARKLKKMGGRFRNGGGTGRKAEEKKALKRKAEEEDDAQND) is disordered. Residues 510 to 526 (DKKRREKEARKLKKMGG) are compositionally biased toward basic residues. Residues 536 to 549 (RKAEEKKALKRKAE) show a composition bias toward basic and acidic residues.

Belongs to the DEAD box helicase family. DDX55/SPB4 subfamily.

It catalyses the reaction ATP + H2O = ADP + phosphate + H(+). Probable ATP-binding RNA helicase. The protein is Probable ATP-dependent RNA helicase DDX55 homolog of Caenorhabditis elegans.